Here is a 1222-residue protein sequence, read N- to C-terminus: BOS complex subunit NOMO1 (1222 aa).

The first 31 residues, 1 to 31, serve as a signal peptide directing secretion; it reads MLVGQGAGPLGPAVVTAAVVLLLSGVGPAHG. Over 32-1155 the chain is Extracellular; sequence SEDIVVGCGG…NPTRKLPEQD (1124 aa). Asn-50, Asn-218, and Asn-618 each carry an N-linked (GlcNAc...) asparagine glycan. Residues 1156–1176 form a helical membrane-spanning segment; that stretch reads IAQGSYIALPLTLLVLLAGYN. Over 1177–1222 the chain is Cytoplasmic; sequence HDKLIPLLLQLTSRLQGVRALGQAASDNSGPEDAKRQAKKQKTRRT. The disordered stretch occupies residues 1198–1222; it reads GQAASDNSGPEDAKRQAKKQKTRRT. Ser-1205 carries the phosphoserine modification. A compositionally biased stretch (basic residues) spans 1213–1222; sequence QAKKQKTRRT.

In terms of assembly, component of the back of Sec61 (BOS) complex, composed of NCLN/Nicalin, NOMO (NOMO1, NOMO2 or NOMO3) and TMEM147. The BOS complex is part of the multi-pass translocon (MPT) complex, composed of three subcomplexes, the GEL complex (composed of RAB5IF/OPTI and TMCO1), the BOS complex (composed of NCLN/Nicalin, NOMO and TMEM147) and the PAT complex (composed of WDR83OS/Asterix and CCDC47). The MPT complex associates with the SEC61 complex. Due to the strong similarity between NOMO1, NOMO2 and NOMO3, similar interaction pattern probably occur for the three gene copies. As to expression, expressed in colon tumor tissue and in adjacent normal colonic mucosa.

Its subcellular location is the endoplasmic reticulum membrane. In terms of biological role, component of the multi-pass translocon (MPT) complex that mediates insertion of multi-pass membrane proteins into the lipid bilayer of membranes. The MPT complex takes over after the SEC61 complex: following membrane insertion of the first few transmembrane segments of proteins by the SEC61 complex, the MPT complex occludes the lateral gate of the SEC61 complex to promote insertion of subsequent transmembrane regions. This Homo sapiens (Human) protein is BOS complex subunit NOMO1 (NOMO1).